The primary structure comprises 159 residues: Cytochrome c-type biogenesis protein CcmE (159 aa).

Topologically, residues Met-1–Arg-7 are cytoplasmic. Residues Leu-8–Ala-28 form a helical; Signal-anchor for type II membrane protein membrane-spanning segment. Residues Leu-29–Ser-159 lie on the Periplasmic side of the membrane. Residues His-121 and Tyr-125 each contribute to the heme site. Positions Leu-134–Ser-159 are disordered.

This sequence belongs to the CcmE/CycJ family.

The protein localises to the cell inner membrane. In terms of biological role, heme chaperone required for the biogenesis of c-type cytochromes. Transiently binds heme delivered by CcmC and transfers the heme to apo-cytochromes in a process facilitated by CcmF and CcmH. The protein is Cytochrome c-type biogenesis protein CcmE of Xanthobacter autotrophicus (strain ATCC BAA-1158 / Py2).